The following is a 110-amino-acid chain: Phosphoribosyl-AMP cyclohydrolase (110 aa).

Residue Asp-74 coordinates Mg(2+). Cys-75 provides a ligand contact to Zn(2+). Residues Asp-76 and Asp-78 each coordinate Mg(2+). Cys-91 and Cys-98 together coordinate Zn(2+).

This sequence belongs to the PRA-CH family. Homodimer. The cofactor is Mg(2+). Requires Zn(2+) as cofactor.

It localises to the cytoplasm. The enzyme catalyses 1-(5-phospho-beta-D-ribosyl)-5'-AMP + H2O = 1-(5-phospho-beta-D-ribosyl)-5-[(5-phospho-beta-D-ribosylamino)methylideneamino]imidazole-4-carboxamide. The protein operates within amino-acid biosynthesis; L-histidine biosynthesis; L-histidine from 5-phospho-alpha-D-ribose 1-diphosphate: step 3/9. Its function is as follows. Catalyzes the hydrolysis of the adenine ring of phosphoribosyl-AMP. The chain is Phosphoribosyl-AMP cyclohydrolase from Lacticaseibacillus casei (strain BL23) (Lactobacillus casei).